The primary structure comprises 92 residues: Putative transcription elongation factor S-II-like protein 81R (92 aa).

A TFIIS-type zinc finger spans residues 51 to 91; the sequence is GTVKCPGCGSRRVHALQRQTRSADEPMTLFAMCSECGKRWT. Residues C55, C58, C83, and C86 each contribute to the Zn(2+) site.

This is Putative transcription elongation factor S-II-like protein 81R from Dryophytes versicolor (chameleon treefrog).